A 191-amino-acid chain; its full sequence is Photosystem I assembly protein Ycf4 (191 aa).

Transmembrane regions (helical) follow at residues 33 to 53 (LLAV…LSSY) and 74 to 94 (LVMG…WAMI).

It belongs to the Ycf4 family.

Its subcellular location is the cellular thylakoid membrane. In terms of biological role, seems to be required for the assembly of the photosystem I complex. This is Photosystem I assembly protein Ycf4 from Prochlorococcus marinus (strain MIT 9303).